The sequence spans 452 residues: Coiled-coil domain-containing protein 71 (452 aa).

Positions 81-106 (PSQTKLQARAPTPAATSPPASAPQTA) are disordered. Residues 87–106 (QARAPTPAATSPPASAPQTA) are compositionally biased toward low complexity. Position 129 is a phosphoserine (Ser129). Disordered stretches follow at residues 209 to 256 (PLKV…GLQS) and 322 to 404 (AREV…LGPG). Residues 279-344 (KAAQAKAACA…QAKAKVARTQ (66 aa)) adopt a coiled-coil conformation. Over residues 332–344 (KAVQAKAKVARTQ) the composition is skewed to low complexity. Residues 377 to 386 (RTEEAKDLSP) are compositionally biased toward basic and acidic residues.

The polypeptide is Coiled-coil domain-containing protein 71 (CCDC71) (Bos taurus (Bovine)).